The chain runs to 1398 residues: DNA-directed RNA polymerase subunit beta' (1398 aa).

Cys70, Cys72, Cys85, and Cys88 together coordinate Zn(2+). 3 residues coordinate Mg(2+): Asp460, Asp462, and Asp464. Zn(2+)-binding residues include Cys814, Cys888, Cys895, and Cys898.

It belongs to the RNA polymerase beta' chain family. In terms of assembly, the RNAP catalytic core consists of 2 alpha, 1 beta, 1 beta' and 1 omega subunit. When a sigma factor is associated with the core the holoenzyme is formed, which can initiate transcription. The cofactor is Mg(2+). Zn(2+) serves as cofactor.

It catalyses the reaction RNA(n) + a ribonucleoside 5'-triphosphate = RNA(n+1) + diphosphate. Its function is as follows. DNA-dependent RNA polymerase catalyzes the transcription of DNA into RNA using the four ribonucleoside triphosphates as substrates. This chain is DNA-directed RNA polymerase subunit beta', found in Pseudomonas putida (Arthrobacter siderocapsulatus).